The sequence spans 199 residues: Probable molybdenum cofactor guanylyltransferase (199 aa).

GTP-binding positions include 9 to 11 (LAG), Lys-21, Asp-69, and Asp-100. Asp-100 is a Mg(2+) binding site.

It belongs to the MobA family. Mg(2+) is required as a cofactor.

It is found in the cytoplasm. It catalyses the reaction Mo-molybdopterin + GTP + H(+) = Mo-molybdopterin guanine dinucleotide + diphosphate. In terms of biological role, transfers a GMP moiety from GTP to Mo-molybdopterin (Mo-MPT) cofactor (Moco or molybdenum cofactor) to form Mo-molybdopterin guanine dinucleotide (Mo-MGD) cofactor. The protein is Probable molybdenum cofactor guanylyltransferase of Bacillus cytotoxicus (strain DSM 22905 / CIP 110041 / 391-98 / NVH 391-98).